Reading from the N-terminus, the 337-residue chain is Glycerol-3-phosphate dehydrogenase [NAD(P)+] (337 aa).

NADPH-binding residues include W12 and K107. Sn-glycerol 3-phosphate is bound by residues K107, G138, and T140. A142 provides a ligand contact to NADPH. Sn-glycerol 3-phosphate contacts are provided by K193, D246, S256, R257, and N258. K193 (proton acceptor) is an active-site residue. An NADPH-binding site is contributed by R257. NADPH is bound by residues V282 and E284.

It belongs to the NAD-dependent glycerol-3-phosphate dehydrogenase family.

It is found in the cytoplasm. It carries out the reaction sn-glycerol 3-phosphate + NAD(+) = dihydroxyacetone phosphate + NADH + H(+). It catalyses the reaction sn-glycerol 3-phosphate + NADP(+) = dihydroxyacetone phosphate + NADPH + H(+). The protein operates within membrane lipid metabolism; glycerophospholipid metabolism. In terms of biological role, catalyzes the reduction of the glycolytic intermediate dihydroxyacetone phosphate (DHAP) to sn-glycerol 3-phosphate (G3P), the key precursor for phospholipid synthesis. The chain is Glycerol-3-phosphate dehydrogenase [NAD(P)+] from Koribacter versatilis (strain Ellin345).